The chain runs to 261 residues: MEMO1 family protein AF_2310 (261 aa).

This sequence belongs to the MEMO1 family.

This Archaeoglobus fulgidus (strain ATCC 49558 / DSM 4304 / JCM 9628 / NBRC 100126 / VC-16) protein is MEMO1 family protein AF_2310.